We begin with the raw amino-acid sequence, 262 residues long: Type III pantothenate kinase (262 aa).

ATP is bound at residue 9-16; the sequence is DIGNTNVK. Residues Tyr-103 and 110–113 contribute to the substrate site; that span reads GADR. Asp-112 acts as the Proton acceptor in catalysis. A K(+)-binding site is contributed by Asp-134. Position 137 (Thr-137) interacts with ATP. Residue Thr-190 participates in substrate binding.

This sequence belongs to the type III pantothenate kinase family. Homodimer. NH4(+) serves as cofactor. It depends on K(+) as a cofactor.

Its subcellular location is the cytoplasm. It carries out the reaction (R)-pantothenate + ATP = (R)-4'-phosphopantothenate + ADP + H(+). It functions in the pathway cofactor biosynthesis; coenzyme A biosynthesis; CoA from (R)-pantothenate: step 1/5. Catalyzes the phosphorylation of pantothenate (Pan), the first step in CoA biosynthesis. In Nitratidesulfovibrio vulgaris (strain DSM 19637 / Miyazaki F) (Desulfovibrio vulgaris), this protein is Type III pantothenate kinase.